The following is a 290-amino-acid chain: Undecaprenyl-diphosphatase (290 aa).

Transmembrane regions (helical) follow at residues 1 to 21 (MALW…FLPV), 49 to 69 (MILF…VVFW), 101 to 121 (LFWL…TLKA), 126 to 146 (VFAS…LLWW), 160 to 180 (INLK…MPGL), 203 to 223 (YSFF…AIEV), 232 to 252 (VGFS…IISL), and 266 to 286 (VFSF…IDLA).

Belongs to the UppP family.

Its subcellular location is the cell inner membrane. It carries out the reaction di-trans,octa-cis-undecaprenyl diphosphate + H2O = di-trans,octa-cis-undecaprenyl phosphate + phosphate + H(+). Functionally, catalyzes the dephosphorylation of undecaprenyl diphosphate (UPP). Confers resistance to bacitracin. This is Undecaprenyl-diphosphatase from Alkalilimnicola ehrlichii (strain ATCC BAA-1101 / DSM 17681 / MLHE-1).